Reading from the N-terminus, the 198-residue chain is Putative pseudouridine methyltransferase (198 aa).

S-adenosyl-L-methionine is bound by residues Met132 and Cys186.

It belongs to the methyltransferase superfamily. TrmY family.

Its subcellular location is the cytoplasm. The sequence is that of Putative pseudouridine methyltransferase from Photobacterium profundum (strain SS9).